The sequence spans 522 residues: Ribose import ATP-binding protein RbsA 1 (522 aa).

ABC transporter domains follow at residues 8 to 243 (LRIE…GRSI) and 249 to 496 (RERP…VSTN). 40–47 (GENGAGKS) is an ATP binding site. Residues 492–522 (AVSTNQYKPDKSDKPDASAGKTDQKEAPRGH) form a disordered region. Over residues 499–522 (KPDKSDKPDASAGKTDQKEAPRGH) the composition is skewed to basic and acidic residues.

The protein belongs to the ABC transporter superfamily. Ribose importer (TC 3.A.1.2.1) family. In terms of assembly, the complex is composed of an ATP-binding protein (RbsA), two transmembrane proteins (RbsC) and a solute-binding protein (RbsB).

The protein localises to the cell membrane. It catalyses the reaction D-ribose(out) + ATP + H2O = D-ribose(in) + ADP + phosphate + H(+). Its function is as follows. Part of the ABC transporter complex RbsABC involved in ribose import. Responsible for energy coupling to the transport system. This Streptomyces avermitilis (strain ATCC 31267 / DSM 46492 / JCM 5070 / NBRC 14893 / NCIMB 12804 / NRRL 8165 / MA-4680) protein is Ribose import ATP-binding protein RbsA 1.